A 308-amino-acid polypeptide reads, in one-letter code: Aspartate carbamoyltransferase catalytic subunit (308 aa).

Residues arginine 55 and threonine 56 each contribute to the carbamoyl phosphate site. Lysine 83 is an L-aspartate binding site. The carbamoyl phosphate site is built by arginine 105, histidine 133, and glutamine 136. 2 residues coordinate L-aspartate: arginine 166 and arginine 220. Carbamoyl phosphate contacts are provided by glycine 261 and proline 262.

This sequence belongs to the aspartate/ornithine carbamoyltransferase superfamily. ATCase family. Heterododecamer (2C3:3R2) of six catalytic PyrB chains organized as two trimers (C3), and six regulatory PyrI chains organized as three dimers (R2).

The enzyme catalyses carbamoyl phosphate + L-aspartate = N-carbamoyl-L-aspartate + phosphate + H(+). The protein operates within pyrimidine metabolism; UMP biosynthesis via de novo pathway; (S)-dihydroorotate from bicarbonate: step 2/3. In terms of biological role, catalyzes the condensation of carbamoyl phosphate and aspartate to form carbamoyl aspartate and inorganic phosphate, the committed step in the de novo pyrimidine nucleotide biosynthesis pathway. The sequence is that of Aspartate carbamoyltransferase catalytic subunit from Chlorobium phaeobacteroides (strain DSM 266 / SMG 266 / 2430).